The primary structure comprises 108 residues: Ig kappa chain V-V region EPC 109 (108 aa).

The framework-1 stretch occupies residues 1–23; the sequence is DVQMIQSPSSLSASLGDIVTMTC. Cys-23 and Cys-88 are disulfide-bonded. The interval 24–34 is complementarity-determining-1; that stretch reads QASQGTNINLN. Positions 35 to 49 are framework-2; sequence WFQQKPGKAPKLLIY. The interval 50 to 56 is complementarity-determining-2; the sequence is GASILEA. Residues 57-88 form a framework-3 region; that stretch reads GVPSRFSGRRYGTDFTLTISSLEDEDMATYFC. Residues 89–97 form a complementarity-determining-3 region; it reads LQHSYLPYT. Residues 98–108 are framework-4; the sequence is FGGGTKLEKKR.

The chain is Ig kappa chain V-V region EPC 109 from Mus musculus (Mouse).